Here is a 73-residue protein sequence, read N- to C-terminus: Large ribosomal subunit protein eL20 (73 aa).

This sequence belongs to the eukaryotic ribosomal protein eL20 family. As to quaternary structure, part of the 50S ribosomal subunit. Binds 23S rRNA.

This Methanococcus aeolicus (strain ATCC BAA-1280 / DSM 17508 / OCM 812 / Nankai-3) protein is Large ribosomal subunit protein eL20.